Reading from the N-terminus, the 427-residue chain is Male abnormal protein mab-31 (427 aa).

Residues 68 to 102 (PIGTGRFPNPSPPRSSSGTNTPIRKTPGSRPDRGK) are disordered.

It is found in the nucleus. Its function is as follows. Putative transcription factor. Acts in a TGF-beta-like pathway during development of male-specific genital sensilla (simple sense organs), known as rays. Involved in production of reactive oxygen species (ROS), acting downstream of the TGF-beta-like dbl-1 signaling pathway. Involved in locomotory behavior. This Caenorhabditis elegans protein is Male abnormal protein mab-31.